A 67-amino-acid polypeptide reads, in one-letter code: Small ribosomal subunit protein eS17 (67 aa).

This sequence belongs to the eukaryotic ribosomal protein eS17 family.

The protein is Small ribosomal subunit protein eS17 of Thermococcus gammatolerans (strain DSM 15229 / JCM 11827 / EJ3).